The primary structure comprises 481 residues: Cobyric acid synthase (481 aa).

The GATase cobBQ-type domain maps to 244-431 (VLRVVIPVLP…LHGLFDAPEA (188 aa)). Catalysis depends on cysteine 325, which acts as the Nucleophile. Histidine 423 is an active-site residue.

The protein belongs to the CobB/CobQ family. CobQ subfamily.

Its pathway is cofactor biosynthesis; adenosylcobalamin biosynthesis. Functionally, catalyzes amidations at positions B, D, E, and G on adenosylcobyrinic A,C-diamide. NH(2) groups are provided by glutamine, and one molecule of ATP is hydrogenolyzed for each amidation. This Ralstonia nicotianae (strain ATCC BAA-1114 / GMI1000) (Ralstonia solanacearum) protein is Cobyric acid synthase.